Consider the following 425-residue polypeptide: Diacetylchitobiose binding protein DasA (425 aa).

The first 20 residues, 1–20 (MKRKLIAAIGIAGMMVSIAA), serve as a signal peptide directing secretion. Cys-21 carries the N-palmitoyl cysteine lipid modification. A lipid anchor (S-diacylglycerol cysteine) is attached at Cys-21.

It belongs to the bacterial solute-binding protein 1 family. As to quaternary structure, the complex is composed of two ATP-binding proteins (MsiK), two transmembrane proteins (DasB and DasC) and a solute-binding protein (DasA).

Its subcellular location is the cell membrane. Its function is as follows. Part of the ABC transporter complex DasABC-MsiK involved in N,N'-diacetylchitobiose ((GlcNAc)2) uptake. Binds specifically to (GlcNAc)2. Can also bind to GlcNAc, (GlcNAc)3, (GlcNAc)4 and (GlcNAc)5, but it exhibits the highest affinity for (GlcNAc)2. Involved in the control of morphological differentiation. This chain is Diacetylchitobiose binding protein DasA, found in Streptomyces coelicolor (strain ATCC BAA-471 / A3(2) / M145).